The sequence spans 516 residues: Sodium channel protein Nach (516 aa).

Over 1-49 (MGHEEELSPEQVDLKVSPLMGSLKRTWNDFCATSSIHGLRYTRDEDTNR) the chain is Cytoplasmic. Residues 50-70 (IVHFVWLLISLVMFICAVVMA) traverse the membrane as a helical segment. Residues 71–452 (RTFYIDFRSN…LVSNLGSAFS (382 aa)) are Extracellular-facing. Residues N128, N165, N220, and N348 are each glycosylated (N-linked (GlcNAc...) asparagine). Residues 453-473 (LFVGMSMLSVVEIMYYFSVIL) traverse the membrane as a helical segment. Residues 474 to 516 (RKNYVLECEARKKMLHKGPKFAWPKANDSHSKHQKSVFIIHKM) lie on the Cytoplasmic side of the membrane.

This sequence belongs to the amiloride-sensitive sodium channel (TC 1.A.6) family.

Its subcellular location is the membrane. Part of a complex that plays a role in tracheal liquid clearance. Probable role in sodium transport. This chain is Sodium channel protein Nach (Nach), found in Drosophila ananassae (Fruit fly).